The primary structure comprises 365 residues: Heat-inducible transcription repressor HrcA (365 aa).

The protein belongs to the HrcA family.

Negative regulator of class I heat shock genes (grpE-dnaK-dnaJ and groELS operons). Prevents heat-shock induction of these operons. This Nodularia spumigena protein is Heat-inducible transcription repressor HrcA.